Here is a 275-residue protein sequence, read N- to C-terminus: Trans-aconitate 2-methyltransferase (275 aa).

This sequence belongs to the methyltransferase superfamily. Tam family.

The protein resides in the cytoplasm. The enzyme catalyses trans-aconitate + S-adenosyl-L-methionine = (E)-3-(methoxycarbonyl)pent-2-enedioate + S-adenosyl-L-homocysteine. Its function is as follows. Catalyzes the S-adenosylmethionine monomethyl esterification of trans-aconitate. The protein is Trans-aconitate 2-methyltransferase of Pseudomonas aeruginosa (strain UCBPP-PA14).